The following is a 354-amino-acid chain: Pyrimidine monooxygenase RutA (354 aa).

FMN contacts are provided by residues 49–50 (IK), Asn-115, Glu-124, 140–141 (RY), and Ser-189.

The protein belongs to the NtaA/SnaA/DszA monooxygenase family. RutA subfamily.

The enzyme catalyses uracil + FMNH2 + NADH + O2 = (Z)-3-ureidoacrylate + FMN + NAD(+) + H2O + H(+). The catalysed reaction is thymine + FMNH2 + NADH + O2 = (Z)-2-methylureidoacrylate + FMN + NAD(+) + H2O + H(+). Catalyzes the pyrimidine ring opening between N-3 and C-4 by an unusual flavin hydroperoxide-catalyzed mechanism, adding oxygen atoms in the process to yield ureidoacrylate peracid, that immediately reacts with FMN forming ureidoacrylate and FMN-N(5)-oxide. The FMN-N(5)-oxide reacts spontaneously with NADH to produce FMN. Requires the flavin reductase RutF to regenerate FMN in vivo. The sequence is that of Pyrimidine monooxygenase RutA from Caulobacter sp. (strain K31).